Reading from the N-terminus, the 516-residue chain is Cytochrome P450 monooxygenase dtxS2 (516 aa).

Residues 23–43 form a helical membrane-spanning segment; that stretch reads ILASVIVLLGLKVATILYTAF. N-linked (GlcNAc...) asparagine glycosylation is present at Asn-187. A helical membrane pass occupies residues 229–249; it reads VLVPLLVFPYISWLLVWWLLS. A heme-binding site is contributed by Cys-458.

The protein belongs to the cytochrome P450 family. The cofactor is heme.

The protein localises to the membrane. The protein operates within secondary metabolite biosynthesis. Its function is as follows. Cytochrome P450 monooxygenase; part of the gene cluster that mediates the biosynthesis of destruxins, insecticidal cyclic hexadepsipeptides which induce flaccid paralysis and visceral muscle contraction in insects through targeting the calcium channels and vacuolar-type ATPases. The aldo-keto reductase dtxS3 converts alpha-ketoisocaproic acid from deaminated leucine into alpha-hydroxyisocaproic acid (HIC), which is the first substrate for destruxin assembly by dtxS1. L-aspartate decarboxylase dtxS4 converts aspartic acid into beta-alanine, the last substrate for the destruxin assembly line performed by dtxS1. The nonribosomal peptide synthetase dtxS1 synthesizes destruxins B and B2, whereas the cytochrome P450 monooxygenase dtxS2 is required to convert destruxin B into other destruxin derivatives, including destructins C, D, A and E. Destruxin E-diol (ED) is further produced in a non-enzymatic manner from destruxin E. Destruxins play an important role in virulence and escape from insect host immune defenses. This is Cytochrome P450 monooxygenase dtxS2 from Metarhizium robertsii (strain ARSEF 23 / ATCC MYA-3075) (Metarhizium anisopliae (strain ARSEF 23)).